The sequence spans 205 residues: Imidazoleglycerol-phosphate dehydratase (205 aa).

Belongs to the imidazoleglycerol-phosphate dehydratase family.

It localises to the cytoplasm. It carries out the reaction D-erythro-1-(imidazol-4-yl)glycerol 3-phosphate = 3-(imidazol-4-yl)-2-oxopropyl phosphate + H2O. The protein operates within amino-acid biosynthesis; L-histidine biosynthesis; L-histidine from 5-phospho-alpha-D-ribose 1-diphosphate: step 6/9. The chain is Imidazoleglycerol-phosphate dehydratase from Chloroflexus aggregans (strain MD-66 / DSM 9485).